A 345-amino-acid chain; its full sequence is MLQALKESKDFLQLTLAQPQHFDETFTFMLGSHTQVEVWDTGVIVFEPKVARGKDIVLSCAVHGNETAPIELCNGLIKSLLEERLIAEQRVLFLFGNPPAIINGTRFIDENLNRLFNGAHSVGEGLVNPERIRAKKLEFYVDKFFSSSKDNSHKIHYDLHTAIRGSKHEKFAIYPYRPGRKYSGEQIMFLEACGIDTVLFHHEPTTTFSYFSSLNYQADAFTIELGKVLPMGQNDMTRFIALNEMLSRLIGNKSLELPDFNAKTVNLYQVCRAINKGFDDFEFTFANDVENFTSFPKGYILAKEGGENIKVEHEVEAIVFPNAKVPVGQRTVLCLKPASTENIDG.

Zn(2+)-binding residues include His-63, Glu-66, and His-160. Glu-224 is a catalytic residue.

The protein belongs to the AspA/AstE family. Succinylglutamate desuccinylase subfamily. Zn(2+) serves as cofactor.

The catalysed reaction is N-succinyl-L-glutamate + H2O = L-glutamate + succinate. Its pathway is amino-acid degradation; L-arginine degradation via AST pathway; L-glutamate and succinate from L-arginine: step 5/5. Its function is as follows. Transforms N(2)-succinylglutamate into succinate and glutamate. This Shewanella woodyi (strain ATCC 51908 / MS32) protein is Succinylglutamate desuccinylase.